The primary structure comprises 493 residues: Endoglucanase 23 (493 aa).

An N-terminal signal peptide occupies residues 1–23; that stretch reads MKASIYLVTVFILLLLLLPTAIP. The Nucleophile role is filled by aspartate 78. Asparagine 297 carries N-linked (GlcNAc...) asparagine glycosylation. Histidine 410 is an active-site residue. N-linked (GlcNAc...) asparagine glycosylation is present at asparagine 465. Glutamate 470 is a catalytic residue.

The protein belongs to the glycosyl hydrolase 9 (cellulase E) family.

It is found in the secreted. The enzyme catalyses Endohydrolysis of (1-&gt;4)-beta-D-glucosidic linkages in cellulose, lichenin and cereal beta-D-glucans.. The chain is Endoglucanase 23 from Arabidopsis thaliana (Mouse-ear cress).